We begin with the raw amino-acid sequence, 167 residues long: Leptin (167 aa).

Positions 1–21 are cleaved as a signal peptide; it reads MYWRTLWGFLWLWPYLFYIQA. A disulfide bridge connects residues Cys117 and Cys167.

This sequence belongs to the leptin family.

The protein resides in the secreted. Its function is as follows. Key player in the regulation of energy balance and body weight control. Once released into the circulation, has central and peripheral effects by binding LEPR, found in many tissues, which results in the activation of several major signaling pathways. In the hypothalamus, acts as an appetite-regulating factor that induces a decrease in food intake and an increase in energy consumption by inducing anorexinogenic factors and suppressing orexigenic neuropeptides, also regulates bone mass and secretion of hypothalamo-pituitary-adrenal hormones. In the periphery, increases basal metabolism, influences reproductive function, regulates pancreatic beta-cell function and insulin secretion, is pro-angiogenic for endothelial cell and affects innate and adaptive immunity. In the arcuate nucleus of the hypothalamus, activates by depolarization POMC neurons inducing FOS and SOCS3 expression to release anorexigenic peptides and inhibits by hyperpolarization NPY neurons inducing SOCS3 with a consequent reduction on release of orexigenic peptides. In addition to its known satiety inducing effect, has a modulatory role in nutrient absorption. In the intestine, reduces glucose absorption by enterocytes by activating PKC and leading to a sequential activation of p38, PI3K and ERK signaling pathways which exerts an inhibitory effect on glucose absorption. Acts as a growth factor on certain tissues, through the activation of different signaling pathways increases expression of genes involved in cell cycle regulation such as CCND1, via JAK2-STAT3 pathway, or VEGFA, via MAPK1/3 and PI3K-AKT1 pathways. May also play an apoptotic role via JAK2-STAT3 pathway and up-regulation of BIRC5 expression. Pro-angiogenic, has mitogenic activity on vascular endothelial cells and plays a role in matrix remodeling by regulating the expression of matrix metalloproteinases (MMPs) and tissue inhibitors of metalloproteinases (TIMPs). In innate immunity, modulates the activity and function of neutrophils by increasing chemotaxis and the secretion of oxygen radicals. Increases phagocytosis by macrophages and enhances secretion of pro-inflammatory mediators. Increases cytotoxic ability of NK cells. Plays a pro-inflammatory role, in synergy with IL1B, by inducing NOS2 which promotes the production of IL6, IL8 and Prostaglandin E2, through a signaling pathway that involves JAK2, PI3K, MAP2K1/MEK1 and MAPK14/p38. In adaptive immunity, promotes the switch of memory T-cells towards T helper-1 cell immune responses. Increases CD4(+)CD25(-) T-cell proliferation and reduces autophagy during TCR (T-cell receptor) stimulation, through MTOR signaling pathway activation and BCL2 up-regulation. This Macaca mulatta (Rhesus macaque) protein is Leptin (LEP).